Reading from the N-terminus, the 154-residue chain is Nuclear cap-binding protein subunit 2 (154 aa).

The tract at residues 1 to 23 (MTASVDLSSYRDQHFKGSRSEQE) is disordered. Positions 9–23 (SYRDQHFKGSRSEQE) are enriched in basic and acidic residues. MRNA contacts are provided by residues tyrosine 10, tyrosine 33, 102–106 (RVDWD), 113–117 (RQYGR), and 123–124 (QV). Positions 30–108 (TTLYVGNLSF…RLIRVDWDAG (79 aa)) constitute an RRM domain.

This sequence belongs to the RRM NCBP2 family. In terms of assembly, component of the nuclear cap-binding complex (CBC), a heterodimer composed of Cbp80 and Cbp20 that interacts with m7GpppG-capped RNA. Interacts with Ars2.

It is found in the nucleus. Component of the cap-binding complex (CBC), which binds co-transcriptionally to the 5' cap of pre-mRNAs and is involved in various processes such as pre-mRNA splicing and RNA-mediated gene silencing (RNAi). The CBC complex is involved in miRNA-mediated RNA interference via its interaction with Ars2 and is required for primary microRNAs (miRNAs) processing. Also involved in innate immunity via the short interfering RNAs (siRNAs) processing machinery by restricting the viral RNA production. In the CBC complex, Cbp20 recognizes and binds capped RNAs (m7GpppG-capped RNA) but requires Cbp80 to stabilize the movement of its N-terminal loop and lock the CBC into a high affinity cap-binding state with the cap structure. This chain is Nuclear cap-binding protein subunit 2 (Cbp20), found in Drosophila grimshawi (Hawaiian fruit fly).